Consider the following 161-residue polypeptide: Endoribonuclease YbeY (161 aa).

Residues His120, His124, and Asp130 each contribute to the Zn(2+) site.

It belongs to the endoribonuclease YbeY family. Requires Zn(2+) as cofactor.

It is found in the cytoplasm. Its function is as follows. Single strand-specific metallo-endoribonuclease involved in late-stage 70S ribosome quality control and in maturation of the 3' terminus of the 16S rRNA. The sequence is that of Endoribonuclease YbeY from Chlamydia trachomatis serovar L2 (strain ATCC VR-902B / DSM 19102 / 434/Bu).